The chain runs to 205 residues: Ras-related protein RABC2b (205 aa).

20–27 (GDSGVGKS) contacts GTP. An Effector region motif is present at residues 41-49 (LAPTIGVDF). Residues 67–71 (DTAGQ), 127–130 (NKVD), and 157–158 (SA) each bind GTP. S-geranylgeranyl cysteine attachment occurs at residues Cys202 and Cys203.

It belongs to the small GTPase superfamily. Rab family.

The protein localises to the cell membrane. In terms of biological role, intracellular vesicle trafficking and protein transport. The chain is Ras-related protein RABC2b (RABC2B) from Arabidopsis thaliana (Mouse-ear cress).